A 319-amino-acid polypeptide reads, in one-letter code: RWD domain-containing protein 2B (319 aa).

The region spanning 41 to 165 (SELDLLASMF…EWVREHASGY (125 aa)) is the RWD domain. Serine 275 is subject to Phosphoserine.

This chain is RWD domain-containing protein 2B (RWDD2B), found in Pongo abelii (Sumatran orangutan).